The primary structure comprises 212 residues: Uracil-DNA glycosylase (212 aa).

Residue D59 is the Proton acceptor of the active site.

This sequence belongs to the uracil-DNA glycosylase (UDG) superfamily. UNG family.

It is found in the cytoplasm. It catalyses the reaction Hydrolyzes single-stranded DNA or mismatched double-stranded DNA and polynucleotides, releasing free uracil.. Functionally, excises uracil residues from the DNA which can arise as a result of misincorporation of dUMP residues by DNA polymerase or due to deamination of cytosine. This Ureaplasma urealyticum serovar 10 (strain ATCC 33699 / Western) protein is Uracil-DNA glycosylase.